Consider the following 406-residue polypeptide: Cysteine desulfurase (406 aa).

At K226 the chain carries N6-(pyridoxal phosphate)lysine. Catalysis depends on C364, which acts as the Cysteine persulfide intermediate.

The protein belongs to the class-V pyridoxal-phosphate-dependent aminotransferase family. Csd subfamily. Homodimer. Interacts with SufE and the SufBCD complex composed of SufB, SufC and SufD. The interaction with SufE is required to mediate the direct transfer of the sulfur atom from the S-sulfanylcysteine. Requires pyridoxal 5'-phosphate as cofactor.

The protein resides in the cytoplasm. It carries out the reaction (sulfur carrier)-H + L-cysteine = (sulfur carrier)-SH + L-alanine. The enzyme catalyses L-selenocysteine + AH2 = hydrogenselenide + L-alanine + A + H(+). Its pathway is cofactor biosynthesis; iron-sulfur cluster biosynthesis. Functionally, cysteine desulfurases mobilize the sulfur from L-cysteine to yield L-alanine, an essential step in sulfur metabolism for biosynthesis of a variety of sulfur-containing biomolecules. Component of the suf operon, which is activated and required under specific conditions such as oxidative stress and iron limitation. Acts as a potent selenocysteine lyase in vitro, that mobilizes selenium from L-selenocysteine. Selenocysteine lyase activity is however unsure in vivo. This chain is Cysteine desulfurase, found in Salmonella choleraesuis (strain SC-B67).